Reading from the N-terminus, the 180-residue chain is CD-NTase/cGAS isopeptidase (180 aa).

Residues I33–V165 form the MPN domain. Catalysis depends on E54, which acts as the Proton donor/acceptor. Residues H115, H117, and D128 each contribute to the Zn(2+) site.

It belongs to the peptidase M67B family. Cap3 isopeptidase subfamily.

Functionally, metalloprotease priming reversal component of a CBASS antivirus system. CBASS (cyclic oligonucleotide-based antiphage signaling system) provides immunity against bacteriophages. The CD-NTase protein (CdnD) synthesizes cyclic nucleotides in response to infection; these serve as specific second messenger signals. The signals activate a diverse range of effectors, leading to bacterial cell death and thus abortive phage infection. A type II-C(AAG) CBASS system. Its function is as follows. Reverses the primed state of DncV, the CD-NTase. Cleaves a CdnD-GFP (green fluorescent protein) fusion protein precisely at the C-terminus of CdnD. Overexpression decreases the efficacy of CBASS protection against phage T2. Antagonism of phage defense upon overexpression is CBASS-system specific, Cap3 from this bacteria only antagonizes its cognate CBASS system and not that of C.freundii, E.coli or V.cholerae. Protects E.coli against phage T2 infection. When the cdnD-cap2-cap3-cap4 operon is introduced in E.coli there is a more than 10(3) decrease in the efficiency of T2 plaque formation. The operon does not protect against phage T5 and only about 10-fold against T7. The polypeptide is CD-NTase/cGAS isopeptidase (Enterobacter hormaechei subsp. hoffmannii (strain UCI 50)).